The chain runs to 337 residues: Integrase/recombinase (337 aa).

Residues 14-94 form the Core-binding (CB) domain; sequence VKVLDQLRER…ALLFFYGKVL (81 aa). Positions 112–328 constitute a Tyr recombinase domain; sequence RLPVVLTPDE…GGAGVRSPLD (217 aa). Residues Arg-146, Lys-171, His-277, Arg-280, and His-303 contribute to the active site. Catalysis depends on Tyr-312, which acts as the O-(3'-phospho-DNA)-tyrosine intermediate.

This sequence belongs to the 'phage' integrase family.

In terms of biological role, putative integrase believed to be involved in the insertion of antibiotic resistance genes into plasmids and transposons. This chain is Integrase/recombinase (int), found in Escherichia coli.